A 237-amino-acid polypeptide reads, in one-letter code: Orotidine 5'-phosphate decarboxylase (237 aa).

Substrate is bound by residues aspartate 11, lysine 34, 61–70, threonine 124, arginine 186, glutamine 195, glycine 215, and arginine 216; that span reads DLKLHDIPNT. Residue lysine 63 is the Proton donor of the active site.

It belongs to the OMP decarboxylase family. Type 1 subfamily. In terms of assembly, homodimer.

The enzyme catalyses orotidine 5'-phosphate + H(+) = UMP + CO2. The protein operates within pyrimidine metabolism; UMP biosynthesis via de novo pathway; UMP from orotate: step 2/2. Its function is as follows. Catalyzes the decarboxylation of orotidine 5'-monophosphate (OMP) to uridine 5'-monophosphate (UMP). This chain is Orotidine 5'-phosphate decarboxylase, found in Lactococcus lactis subsp. cremoris (strain SK11).